Consider the following 290-residue polypeptide: Protein ORF27 (290 aa).

This chain is Protein ORF27 (ORF27), found in Human herpesvirus 8 type P (isolate GK18) (HHV-8).